Consider the following 352-residue polypeptide: Protein MGF 360-16R (352 aa).

This sequence belongs to the asfivirus MGF 360 family.

Plays a role in virus cell tropism, and may be required for efficient virus replication in macrophages. The sequence is that of Protein MGF 360-16R from African swine fever virus (isolate Warthog/Namibia/Wart80/1980) (ASFV).